The following is a 291-amino-acid chain: N-acetylmannosamine kinase (291 aa).

ATP is bound by residues 5–12 (AIDIGGTK) and 132–139 (GVGGGVVS). Zn(2+)-binding residues include histidine 156, cysteine 166, cysteine 168, and cysteine 173.

The protein belongs to the ROK (NagC/XylR) family. NanK subfamily. Homodimer.

It carries out the reaction an N-acyl-D-mannosamine + ATP = an N-acyl-D-mannosamine 6-phosphate + ADP + H(+). Its pathway is amino-sugar metabolism; N-acetylneuraminate degradation; D-fructose 6-phosphate from N-acetylneuraminate: step 2/5. In terms of biological role, catalyzes the phosphorylation of N-acetylmannosamine (ManNAc) to ManNAc-6-P. The polypeptide is N-acetylmannosamine kinase (Escherichia coli O139:H28 (strain E24377A / ETEC)).